Here is a 41-residue protein sequence, read N- to C-terminus: Alpha-conotoxin CIB (41 aa).

A propeptide spanning residues 1-21 (SDGRNEAANDEASDVIELALK) is cleaved from the precursor. Cystine bridges form between Cys23-Cys29 and Cys24-Cys37. Residues 25-27 (SNP) are ser-Xaa-Pro motif, crucial for potent interaction with nAChR. Cys37 is modified (cysteine amide).

This sequence belongs to the conotoxin A superfamily. In terms of tissue distribution, expressed by the venom duct.

The protein localises to the secreted. In terms of biological role, alpha-conotoxins act on postsynaptic membranes, they bind to the nicotinic acetylcholine receptors (nAChR) and thus inhibit them. This toxin blocks rat neuronal nAChR alpha-3-beta-2/CHRNA3-CHRNB2 (IC(50)=128.9 nM) and alpha-7/CHRNA7 (IC(50)=1511 nM). In vivo, intramuscular injection into zebrafish does not produce any effect on the locomotion of zebrafish. The polypeptide is Alpha-conotoxin CIB (Conus catus (Cat cone)).